The primary structure comprises 243 residues: Uridylate kinase (243 aa).

Residue 12 to 15 participates in ATP binding; sequence KLSG. The involved in allosteric activation by GTP stretch occupies residues 20 to 25; that stretch reads GPGGSG. Glycine 56 provides a ligand contact to UMP. Residues glycine 57 and arginine 61 each coordinate ATP. Residues aspartate 76 and 137-144 each bind UMP; that span reads TGSPYFST. ATP contacts are provided by asparagine 165, tyrosine 171, and aspartate 174.

It belongs to the UMP kinase family. Homohexamer.

Its subcellular location is the cytoplasm. The catalysed reaction is UMP + ATP = UDP + ADP. The protein operates within pyrimidine metabolism; CTP biosynthesis via de novo pathway; UDP from UMP (UMPK route): step 1/1. Its activity is regulated as follows. Allosterically activated by GTP. Inhibited by UTP. Functionally, catalyzes the reversible phosphorylation of UMP to UDP. The protein is Uridylate kinase of Oenococcus oeni (strain ATCC BAA-331 / PSU-1).